Consider the following 459-residue polypeptide: MSEENKKQILKVRDFIEKHNIDTIRLGAVDIDGVWRGKQVGAEYFLNKAALDGTQISNILFGWDVADHLVDGLEFTGWDSGYPDIALIPDLSTLSLVPWQEKTASVLCDIQHLNGEPLNLSPRNLLRKAIEKAEQLGYKCYAAYEFEFYLLNDSIASISADQWRSINPVEKSGHCYSMLHHSSSSDIMGEVRKYMRDAGIVLEATNSEHGPGQYEINIKYDDALKAADDAIFVKNGIKEIAAKHGMTATFMAKPSAEWSGSSGHVHMSLSDLAGTPVFANPENPGALSEVGYNFLAGMVALAREMSAIYLPNINSYKRTAGASWAGGNSSWGFDNRTVSHRAITSAGSAARVENRIPGADTNPYLVIAASLLSGLYGIENKLKPKDPILGNAYKVSPELARPLAASLEEAAGIFRESEMARVIFPNEFVEHYAQMKVWEIKQSNSFVNNWELARYLDII.

One can recognise a GS beta-grasp domain in the interval 19–115; the sequence is HNIDTIRLGA…VLCDIQHLNG (97 aa). Residues 122 to 459 enclose the GS catalytic domain; sequence PRNLLRKAIE…WELARYLDII (338 aa).

Belongs to the glutamine synthetase family.

It catalyses the reaction isopropylamine + L-glutamate + ATP = gamma-L-glutamyl-isopropylamide + ADP + phosphate + H(+). Its function is as follows. Involved in the degradation of isopropylamine, which is a constituent of the herbicides atrazine. Catalyzes the ATP-dependent formation of gamma-glutamyl-isopropylamide from isopropylamine and L-glutamate. It can also use aminoalkanes, amino-alcohols (L-alaninol and D-alaninol) and amino-esters as substrates. This is Glutamate--isopropylamine ligase (ipuC) from Pseudomonas sp.